We begin with the raw amino-acid sequence, 251 residues long: Orotidine 5'-phosphate decarboxylase (251 aa).

Substrate-binding positions include Asp19, Lys42, 69 to 78 (DLKFHDIPNT), Thr133, Arg194, Gln204, Gly224, and Arg225. Lys71 (proton donor) is an active-site residue.

It belongs to the OMP decarboxylase family. Type 1 subfamily. In terms of assembly, homodimer.

It carries out the reaction orotidine 5'-phosphate + H(+) = UMP + CO2. It functions in the pathway pyrimidine metabolism; UMP biosynthesis via de novo pathway; UMP from orotate: step 2/2. Its function is as follows. Catalyzes the decarboxylation of orotidine 5'-monophosphate (OMP) to uridine 5'-monophosphate (UMP). In Syntrophus aciditrophicus (strain SB), this protein is Orotidine 5'-phosphate decarboxylase.